The chain runs to 161 residues: Arginine repressor (161 aa).

It belongs to the ArgR family.

It is found in the cytoplasm. It functions in the pathway amino-acid biosynthesis; L-arginine biosynthesis [regulation]. In terms of biological role, regulates arginine biosynthesis genes. This chain is Arginine repressor, found in Corynebacterium aurimucosum (strain ATCC 700975 / DSM 44827 / CIP 107346 / CN-1) (Corynebacterium nigricans).